We begin with the raw amino-acid sequence, 370 residues long: Developmentally-regulated GTP-binding protein 1 homolog (370 aa).

The OBG-type G domain occupies 65–292 (ARVGLIGFPS…LLDKIWEYLK (228 aa)). GTP contacts are provided by residues 71–78 (GFPSVGKS), 117–121 (DLPGI), and 250–253 (NKID). The region spanning 292–369 (KLIRVYTKPK…ADEDIVQIVK (78 aa)) is the TGS domain.

Belongs to the TRAFAC class OBG-HflX-like GTPase superfamily. OBG GTPase family.

This chain is Developmentally-regulated GTP-binding protein 1 homolog (drg1), found in Dictyostelium discoideum (Social amoeba).